A 107-amino-acid chain; its full sequence is Large ribosomal subunit protein P2 (107 aa).

The span at 63–83 shows a compositional bias: low complexity; the sequence is SSVPSGGSAPAAAAPSGGAAP. The tract at residues 63 to 107 is disordered; it reads SSVPSGGSAPAAAAPSGGAAPKAEEKKKEEPKEESDDDMGFGLFD. Basic and acidic residues predominate over residues 84-93; it reads KAEEKKKEEP.

The protein belongs to the eukaryotic ribosomal protein P1/P2 family. In terms of assembly, P1 and P2 exist as dimers at the large ribosomal subunit. Phosphorylated.

Functionally, plays an important role in the elongation step of protein synthesis. The chain is Large ribosomal subunit protein P2 from Caenorhabditis elegans.